The following is a 168-amino-acid chain: G/U mismatch-specific DNA glycosylase (168 aa).

Belongs to the uracil-DNA glycosylase (UDG) superfamily. TDG/mug family. As to quaternary structure, binds DNA as a monomer.

It is found in the cytoplasm. The catalysed reaction is Specifically hydrolyzes mismatched double-stranded DNA and polynucleotides, releasing free uracil.. Its function is as follows. Excises ethenocytosine and uracil, which can arise by alkylation or deamination of cytosine, respectively, from the corresponding mispairs with guanine in ds-DNA. It is capable of hydrolyzing the carbon-nitrogen bond between the sugar-phosphate backbone of the DNA and the mispaired base. The complementary strand guanine functions in substrate recognition. Required for DNA damage lesion repair in stationary-phase cells. The protein is G/U mismatch-specific DNA glycosylase of Escherichia coli O139:H28 (strain E24377A / ETEC).